The primary structure comprises 428 residues: Small ribosomal subunit protein uS2m (428 aa).

A disordered region spans residues 30-50; the sequence is FLSQDNFTAPPPPPTNSKKQA.

This sequence belongs to the universal ribosomal protein uS2 family. In terms of assembly, component of the mitochondrial small ribosomal subunit (mt-SSU). Mature N.crassa 74S mitochondrial ribosomes consist of a small (37S) and a large (54S) subunit. The 37S small subunit contains a 16S ribosomal RNA (16S mt-rRNA) and 32 different proteins. The 54S large subunit contains a 23S rRNA (23S mt-rRNA) and 42 different proteins.

It localises to the mitochondrion. Its function is as follows. Component of the mitochondrial ribosome (mitoribosome), a dedicated translation machinery responsible for the synthesis of mitochondrial genome-encoded proteins, including at least some of the essential transmembrane subunits of the mitochondrial respiratory chain. The mitoribosomes are attached to the mitochondrial inner membrane and translation products are cotranslationally integrated into the membrane. The sequence is that of Small ribosomal subunit protein uS2m (mrp4) from Neurospora crassa (strain ATCC 24698 / 74-OR23-1A / CBS 708.71 / DSM 1257 / FGSC 987).